We begin with the raw amino-acid sequence, 107 residues long: Iron-sulfur cluster assembly protein CyaY (107 aa).

It belongs to the frataxin family.

Its function is as follows. Involved in iron-sulfur (Fe-S) cluster assembly. May act as a regulator of Fe-S biogenesis. The sequence is that of Iron-sulfur cluster assembly protein CyaY from Neisseria meningitidis serogroup B (strain ATCC BAA-335 / MC58).